Here is a 23-residue protein sequence, read N- to C-terminus: Acidic phospholipase A2 Cvv-E6c (23 aa).

The cofactor is Ca(2+). Post-translationally, contains 7 disulfide bonds. In terms of tissue distribution, expressed by the venom gland.

It localises to the secreted. It catalyses the reaction a 1,2-diacyl-sn-glycero-3-phosphocholine + H2O = a 1-acyl-sn-glycero-3-phosphocholine + a fatty acid + H(+). Functionally, snake venom phospholipase A2 (PLA2) that significantly inhibits ADP-induced platelet aggregation in platelet-rich plasma of human, rabbit and guinea pig. PLA2 catalyzes the calcium-dependent hydrolysis of the 2-acyl groups in 3-sn-phosphoglycerides. The protein is Acidic phospholipase A2 Cvv-E6c of Crotalus viridis viridis (Prairie rattlesnake).